Consider the following 908-residue polypeptide: ATP-dependent RNA helicase DBP10 (908 aa).

The segment at 1-84 (MSDDEAFDIA…DDDDDSKINS (84 aa)) is disordered. 2 stretches are compositionally biased toward acidic residues: residues 17–43 (DEDDYSDSSSNEGEDFQDEIIPSDDEK) and 66–79 (SDNEGNNDDDDDDD). Positions 99–127 (GSFASFGLTKFILANIAKKGYKQPTPIQR) match the Q motif motif. Residues 130-301 (IPLIMEGRDV…KAGLTNPVLV (172 aa)) form the Helicase ATP-binding domain. 143-150 (ARTGSGKT) contributes to the ATP binding site. Residues 249–252 (DEAD) carry the DEAD box motif. Disordered stretches follow at residues 352–389 (DMDKRKIDSDSEDDDDDEERKKGKKRYKFKKERLPPAN) and 821–885 (LKPT…STEQ). Positions 373-382 (KGKKRYKFKK) are enriched in basic residues. Residues 373–533 (KGKKRYKFKK…EAKVEMLKKS (161 aa)) enclose the Helicase C-terminal domain. The segment covering 844-854 (KLPDKFRDDYH) has biased composition (basic and acidic residues).

Belongs to the DEAD box helicase family. DDX54/DBP10 subfamily.

Its subcellular location is the nucleus. It is found in the nucleolus. It catalyses the reaction ATP + H2O = ADP + phosphate + H(+). In terms of biological role, ATP-binding RNA helicase involved in the biogenesis of 60S ribosomal subunits and is required for the normal formation of 25S and 5.8S rRNAs. This chain is ATP-dependent RNA helicase DBP10 (DBP10), found in Candida albicans (strain SC5314 / ATCC MYA-2876) (Yeast).